The following is a 311-amino-acid chain: Putative methylthioribose-1-phosphate isomerase (311 aa).

Substrate contacts are provided by residues 46 to 48, arginine 80, and glutamine 174; that span reads RGA. Aspartate 215 (proton donor) is an active-site residue. Position 224–225 (224–225) interacts with substrate; sequence NK.

The protein belongs to the eIF-2B alpha/beta/delta subunits family. MtnA subfamily.

The catalysed reaction is 5-(methylsulfanyl)-alpha-D-ribose 1-phosphate = 5-(methylsulfanyl)-D-ribulose 1-phosphate. Its function is as follows. Catalyzes the interconversion of methylthioribose-1-phosphate (MTR-1-P) into methylthioribulose-1-phosphate (MTRu-1-P). This is Putative methylthioribose-1-phosphate isomerase from Methanothermobacter thermautotrophicus (strain ATCC 29096 / DSM 1053 / JCM 10044 / NBRC 100330 / Delta H) (Methanobacterium thermoautotrophicum).